Consider the following 355-residue polypeptide: Probable butyrate kinase (355 aa).

Belongs to the acetokinase family.

Its subcellular location is the cytoplasm. The enzyme catalyses butanoate + ATP = butanoyl phosphate + ADP. This chain is Probable butyrate kinase, found in Listeria monocytogenes serotype 4a (strain HCC23).